The following is a 367-amino-acid chain: Heme A synthase (367 aa).

5 consecutive transmembrane segments (helical) span residues 25 to 45, 111 to 131, 139 to 159, 174 to 194, and 210 to 230; these read ALRF…LVGG, LIAR…WLTG, WPLV…WWMV, LATH…IMRG, and GFAA…ALVA. A heme-binding site is contributed by histidine 274. The next 3 membrane-spanning stretches (helical) occupy residues 276–296, 305–325, and 327–347; these read IGAY…LRAA, AILL…TLLM, and VPLH…GFAV. Residue histidine 335 participates in heme binding.

The protein belongs to the COX15/CtaA family. Type 2 subfamily. In terms of assembly, interacts with CtaB. Heme b is required as a cofactor.

It localises to the cell membrane. The enzyme catalyses Fe(II)-heme o + 2 A + H2O = Fe(II)-heme a + 2 AH2. The protein operates within porphyrin-containing compound metabolism; heme A biosynthesis; heme A from heme O: step 1/1. Its function is as follows. Catalyzes the conversion of heme O to heme A by two successive hydroxylations of the methyl group at C8. The first hydroxylation forms heme I, the second hydroxylation results in an unstable dihydroxymethyl group, which spontaneously dehydrates, resulting in the formyl group of heme A. This Rhizobium johnstonii (strain DSM 114642 / LMG 32736 / 3841) (Rhizobium leguminosarum bv. viciae) protein is Heme A synthase.